Reading from the N-terminus, the 62-residue chain is Large ribosomal subunit protein uL29 (62 aa).

Belongs to the universal ribosomal protein uL29 family.

The sequence is that of Large ribosomal subunit protein uL29 from Chromobacterium violaceum (strain ATCC 12472 / DSM 30191 / JCM 1249 / CCUG 213 / NBRC 12614 / NCIMB 9131 / NCTC 9757 / MK).